The following is a 150-amino-acid chain: Cytochrome c-type biogenesis protein CcmE (150 aa).

Residues M1 to R7 are Cytoplasmic-facing. The helical; Signal-anchor for type II membrane protein transmembrane segment at L8–A28 threads the bilayer. Topologically, residues F29 to R150 are periplasmic. Heme-binding residues include H123 and Y127.

It belongs to the CcmE/CycJ family.

The protein localises to the cell inner membrane. Heme chaperone required for the biogenesis of c-type cytochromes. Transiently binds heme delivered by CcmC and transfers the heme to apo-cytochromes in a process facilitated by CcmF and CcmH. This is Cytochrome c-type biogenesis protein CcmE from Sinorhizobium medicae (strain WSM419) (Ensifer medicae).